The sequence spans 1093 residues: GPI ethanolamine phosphate transferase 3, catalytic subunit (1093 aa).

Residues 4–24 traverse the membrane as a helical segment; the sequence is VSVLLFLAWVCFLFYAGIALF. An N-linked (GlcNAc...) asparagine glycan is attached at Asn268. The next 9 membrane-spanning stretches (helical) occupy residues 460-480, 483-503, 512-532, 669-689, 702-722, 748-768, 831-851, 856-876, and 945-965; these read AAACLLCLLASQLAVAPGFLF, LLLIPVAWGLTWTILYAGVSV, VVLGAVAAAGSLLPFLWKAWV, LWYGACVGALVALLVVVRLWL, VLFVRWGMPLMVLGTAAYWAL, VMGLAALGLVLLLWRPVTVLV, SVYSAAMVTALLLLAFPLMLL, VSLVFLLLFLQSFLLLHLLAA, and FASHLLFAVGCPLLLLWPFLC. Residues 971–991 are disordered; the sequence is KRRQPLPGSESEARVRPEEEE. The next 2 membrane-spanning stretches (helical) occupy residues 1018-1038 and 1052-1072; these read LKYLFILGAQILACALAASIL and FIFEAVGFIVSSVGLLLGIAL.

The protein belongs to the PIGG/PIGN/PIGO family. PIGO subfamily. In terms of assembly, forms the ethanolamine phosphate transferase 3 complex composed by PIGO and PIGF. PIGF is required to stabilize PIGO.

The protein resides in the endoplasmic reticulum membrane. Its pathway is glycolipid biosynthesis; glycosylphosphatidylinositol-anchor biosynthesis. Functionally, catalytic subunit of the ethanolamine phosphate transferase 3 complex that transfers an ethanolamine phosphate (EtNP) from a phosphatidylethanolamine (PE) to the 6-OH position of the third alpha-1,2-linked mannose of the an alpha-D-Man-(1-&gt;2)-alpha-D-Man-(1-&gt;6)-2-PEtn-alpha-D-Man-(1-&gt;4)-alpha-D-GlcN-(1-&gt;6)-(1-radyl,2-acyl-sn-glycero-3-phospho)-2-acyl-inositol (also termed H6) intermediate to generate a 6-PEtn-alpha-D-Man-(1-&gt;2)-alpha-D-Man-(1-&gt;6)-2-PEtn-alpha-D-Man-(1-&gt;4)-alpha-D-GlcN-(1-&gt;6)-(1-radyl,2-acyl-sn-glycero-3-phospho)-2-acyl-inositol (also termed H7) and participates in the tenth step of the glycosylphosphatidylinositol-anchor biosynthesis. The chain is GPI ethanolamine phosphate transferase 3, catalytic subunit from Mus musculus (Mouse).